Here is a 363-residue protein sequence, read N- to C-terminus: Dioxygenase sphC (363 aa).

Fe cation-binding residues include H183, D185, and H259.

Belongs to the PhyH family. In terms of assembly, homodimer. Fe cation is required as a cofactor.

The enzyme catalyses sphingofungin B1 + 2-oxoglutarate + O2 = sphingofungin B + succinate + CO2. The protein operates within secondary metabolite biosynthesis. Dioxygenase; part of the gene cluster that mediates the biosynthesis of sphingofungins, bioactive molecules acting as sphingolipid inhibitors via inhibiting serine palmitoyl transferase (SPT). Within the pathway, sphC catalyzes the hydrolxylation at C-4 to convert sphingofungin B1 into sphingofungin B as well as presphingofungin into sphingofungin B2. Sphingofungin biosynthesis starts with the PKS sphB that produces an C18 polyketide precursor 3-hydroxyoctadeca-4,10-dienoyl-ACP containing one delta-6 desaturation and one delta-12 desaturation. The aminoacyl transferase sphA uses the sphB product to produce 3-keto-presphingofungin by adding an aminomalonate molecule. SphF then reduces the C-3 ketone of 3-keto-presphingofungin which leads to presphingofungin. The cytochrome P450 monooxygenase sphH converts presphingofungin into sphingofungin B1 which is further converted to sphingofungin B by the dioxygenase sphC. SphC is also able to convert presphingofungin into sphingofungin B2. The acetyltransferase sphE acetylates sphingofungin B to produce sphingofungin C, but can also convert sphingofungin B1 into sphingofungin C1 and sphingofungin B2 into sphingofungin C2. Finally, sphingofungin C can be spontaneously converted into sphingofungin D. The chain is Dioxygenase sphC from Aspergillus fumigatus (strain CBS 144.89 / FGSC A1163 / CEA10) (Neosartorya fumigata).